Reading from the N-terminus, the 209-residue chain is Ribosomal RNA large subunit methyltransferase E (209 aa).

Positions 63, 65, 83, 99, and 124 each coordinate S-adenosyl-L-methionine. The Proton acceptor role is filled by Lys-164.

This sequence belongs to the class I-like SAM-binding methyltransferase superfamily. RNA methyltransferase RlmE family.

It is found in the cytoplasm. It catalyses the reaction uridine(2552) in 23S rRNA + S-adenosyl-L-methionine = 2'-O-methyluridine(2552) in 23S rRNA + S-adenosyl-L-homocysteine + H(+). In terms of biological role, specifically methylates the uridine in position 2552 of 23S rRNA at the 2'-O position of the ribose in the fully assembled 50S ribosomal subunit. This chain is Ribosomal RNA large subunit methyltransferase E, found in Shewanella denitrificans (strain OS217 / ATCC BAA-1090 / DSM 15013).